We begin with the raw amino-acid sequence, 99 residues long: Progonadoliberin-1 (99 aa).

The first 26 residues, 1–26 (MAAQTFALRLLLVGTLLGTLLGQGCC), serve as a signal peptide directing secretion. Glutamine 27 bears the Pyrrolidone carboxylic acid mark. The residue at position 36 (glycine 36) is a Glycine amide.

The protein belongs to the GnRH family.

Its subcellular location is the secreted. In terms of biological role, stimulates the secretion of gonadotropins. The sequence is that of Progonadoliberin-1 (gnrh1) from Dicentrarchus labrax (European seabass).